We begin with the raw amino-acid sequence, 88 residues long: Phosphocarrier protein HPr (88 aa).

The 88-residue stretch at 1–88 folds into the HPr domain; sequence MASKEFHIVA…ETMTKEGLAE (88 aa). Residue His-15 is the Pros-phosphohistidine intermediate of the active site. Position 46 is a phosphoserine; by HPrK/P (Ser-46).

It belongs to the HPr family.

The protein resides in the cytoplasm. Phosphorylation on Ser-46 inhibits the phosphoryl transfer from enzyme I to HPr. Its function is as follows. General (non sugar-specific) component of the phosphoenolpyruvate-dependent sugar phosphotransferase system (sugar PTS). This major carbohydrate active-transport system catalyzes the phosphorylation of incoming sugar substrates concomitantly with their translocation across the cell membrane. The phosphoryl group from phosphoenolpyruvate (PEP) is transferred to the phosphoryl carrier protein HPr by enzyme I. Phospho-HPr then transfers it to the PTS EIIA domain. In terms of biological role, P-Ser-HPr interacts with the catabolite control protein A (CcpA), forming a complex that binds to DNA at the catabolite response elements cre, operator sites preceding a large number of catabolite-regulated genes. Thus, P-Ser-HPr is a corepressor in carbon catabolite repression (CCR), a mechanism that allows bacteria to coordinate and optimize the utilization of available carbon sources. P-Ser-HPr also plays a role in inducer exclusion, in which it probably interacts with several non-PTS permeases and inhibits their transport activity. This chain is Phosphocarrier protein HPr (ptsH), found in Lactococcus lactis subsp. cremoris (Streptococcus cremoris).